The sequence spans 236 residues: Probable chemoreceptor glutamine deamidase CheD (236 aa).

The disordered stretch occupies residues 1-20; the sequence is MIEFGKRATPQSAADAVRGD.

The protein belongs to the CheD family.

The catalysed reaction is L-glutaminyl-[protein] + H2O = L-glutamyl-[protein] + NH4(+). Its function is as follows. Probably deamidates glutamine residues to glutamate on methyl-accepting chemotaxis receptors (MCPs), playing an important role in chemotaxis. The chain is Probable chemoreceptor glutamine deamidase CheD from Ralstonia pickettii (strain 12J).